Here is a 398-residue protein sequence, read N- to C-terminus: Methionine aminopeptidase 1A (398 aa).

Alanine 2 is subject to N-acetylalanine. A C6H2-type zinc finger spans residues 12–65 (TLSCARCEKPAHLQCPKCIDLKLPREQASFCTQECFKAAWSSHKSVHVKAQLSS). Zn(2+) contacts are provided by cysteine 15, cysteine 18, cysteine 26, cysteine 29, cysteine 42, cysteine 46, histidine 54, and histidine 58. Histidine 214 contacts a protein. Zn(2+)-binding residues include aspartate 231, aspartate 242, and histidine 305. Histidine 312 provides a ligand contact to a protein. Zn(2+) is bound by residues glutamate 338 and glutamate 369.

Belongs to the peptidase M24A family. Methionine aminopeptidase type 1 subfamily. Associates with the 60S ribosomal subunit of the 80S translational complex. The cofactor is Zn(2+). Requires Co(2+) as cofactor. It depends on Mn(2+) as a cofactor. Fe(2+) is required as a cofactor. In terms of tissue distribution, ubiquitous.

It is found in the cytoplasm. The catalysed reaction is Release of N-terminal amino acids, preferentially methionine, from peptides and arylamides.. In terms of biological role, cotranslationally removes the N-terminal methionine from nascent proteins. The N-terminal methionine is often cleaved when the second residue in the primary sequence is small and uncharged (Met-Ala-, Cys, Gly, Pro, Ser, Thr, or Val). The sequence is that of Methionine aminopeptidase 1A (MAP1A) from Arabidopsis thaliana (Mouse-ear cress).